The chain runs to 518 residues: E3 ubiquitin-protein ligase TRIM39 (518 aa).

Residues 29–70 (CSVCLEYLKEPVIIECGHNFCKACITRWWEDLERDFPCPVCR) form an RING-type zinc finger. The B box-type zinc-finger motif lies at 102–143 (RDESLCPQHHEALSLFCYEDQEAVCLICAISHTHRAHTVVPL). Positions 107, 110, 129, and 135 each coordinate Zn(2+). A coiled-coil region spans residues 181-250 (ELKRLVESRR…AHLAAEVEGK (70 aa)). Interaction with CDKN1A regions lie at residues 268–337 (KNIP…QLIA) and 389–518 (TSGR…TDWE). Residues 319–514 (SNFPRQYFAL…NAAPLTIRPP (196 aa)) form the B30.2/SPRY domain.

It belongs to the TRIM/RBCC family. In terms of assembly, interacts with MOAP1. Interacts with CDKN1A. Autoubiquitinated.

Its subcellular location is the cytoplasm. The protein resides in the cytosol. It localises to the mitochondrion. The protein localises to the nucleus. The catalysed reaction is S-ubiquitinyl-[E2 ubiquitin-conjugating enzyme]-L-cysteine + [acceptor protein]-L-lysine = [E2 ubiquitin-conjugating enzyme]-L-cysteine + N(6)-ubiquitinyl-[acceptor protein]-L-lysine.. Its pathway is protein modification; protein ubiquitination. Functionally, E3 ubiquitin-protein ligase. May facilitate apoptosis by inhibiting APC/C-Cdh1-mediated poly-ubiquitination and subsequent proteasome-mediated degradation of the pro-apoptotic protein MOAP1. Regulates the G1/S transition of the cell cycle and DNA damage-induced G2 arrest by stabilizing CDKN1A/p21. Positively regulates CDKN1A/p21 stability by competing with DTL for CDKN1A/p21 binding, therefore disrupting DCX(DTL) E3 ubiquitin ligase complex-mediated CDKN1A/p21 ubiquitination and degradation. The sequence is that of E3 ubiquitin-protein ligase TRIM39 (TRIM39) from Pan troglodytes (Chimpanzee).